Consider the following 258-residue polypeptide: Capsid protein (258 aa).

Positions 3 to 20 (KRPGDIIISTPGSKVRRR) match the Bipartite nuclear localization signal motif. Residues 41 to 55 (RKRAWMNRPMYRKPM) carry the Nuclear localization signal motif. A zinc finger lies at 69–86 (CEGPCKVQSFEQRDDVKH). Positions 102 to 123 (LTHRVGKRFCIKSIYILGKIWM) match the Nuclear export signal motif. Positions 202–249 (KRFYRLNHHVTYNHQEAGKYENHTENALLLYMACTHASNPVYATLKIR) match the Bipartite nuclear localization signal motif.

The protein belongs to the geminiviridae capsid protein family. In terms of assembly, homomultimer. Binds to single-stranded and double-stranded viral DNA. Interacts (via nuclear localization signals) with host importin alpha-1a.

The protein resides in the virion. It localises to the host nucleus. Functionally, encapsidates the viral DNA into characteristic twinned ('geminate') particles. Binds the genomic viral ssDNA and shuttles it into and out of the cell nucleus. The CP of bipartite geminiviruses is not required for cell-to-cell or systemic movement. This is Capsid protein from Hewittia sublobata (Coralbush).